The sequence spans 697 residues: U-box domain-containing protein 18 (697 aa).

The tract at residues 23–210 is U-box N-terminal domain (UND) required for EXO70B1 binding and crucial for the negative regulation of ABA-dependent stomatal movement; sequence SISIVTLLDS…INRILDHVGI (188 aa). A U-box domain is found at 287–361; sequence LKVEDLLCPI…RKHCKTNGIV (75 aa). ARM repeat units lie at residues 420-459, 461-500, 502-544, 546-587, 589-631, and 657-696; these read SFNRSCLVKAGAVTPLLKLLSSVDIRIQENAMAGILNLSK, VTGKSKIAGEGLKILVEILNEGAKTETRLYSASALFYLSS, EDYS…GLLM, SDNH…KLAE, PDGT…NLCL, and NGEYGGSKKASALIRMIHEFQERKTGSVEPNLQRGRFVHA.

As to quaternary structure, interacts with EXO70B1 via its U-box N-terminal domain (UND).

It is found in the endomembrane system. The enzyme catalyses S-ubiquitinyl-[E2 ubiquitin-conjugating enzyme]-L-cysteine + [acceptor protein]-L-lysine = [E2 ubiquitin-conjugating enzyme]-L-cysteine + N(6)-ubiquitinyl-[acceptor protein]-L-lysine.. The protein operates within protein modification; protein ubiquitination. Its function is as follows. Functions as an E3 ubiquitin ligase. Mediates EXO70B1 ubiquitination. Involved in the regulation of abscisic acid (ABA)-mediated stomatal movements. This chain is U-box domain-containing protein 18, found in Arabidopsis thaliana (Mouse-ear cress).